A 231-amino-acid polypeptide reads, in one-letter code: 7-cyano-7-deazaguanine synthase (231 aa).

Residue phenylalanine 8–leucine 18 participates in ATP binding. Positions 188, 197, 200, and 203 each coordinate Zn(2+).

This sequence belongs to the QueC family. Zn(2+) serves as cofactor.

The enzyme catalyses 7-carboxy-7-deazaguanine + NH4(+) + ATP = 7-cyano-7-deazaguanine + ADP + phosphate + H2O + H(+). It participates in purine metabolism; 7-cyano-7-deazaguanine biosynthesis. Its function is as follows. Catalyzes the ATP-dependent conversion of 7-carboxy-7-deazaguanine (CDG) to 7-cyano-7-deazaguanine (preQ(0)). The chain is 7-cyano-7-deazaguanine synthase from Escherichia coli (strain SE11).